A 381-amino-acid polypeptide reads, in one-letter code: Magnesium transporter MRS2-I (381 aa).

2 helical membrane-spanning segments follow: residues 316–336 (LFLS…GIFG) and 353–373 (WVVL…VAYA). The Required for magnesium transport activity signature appears at 336 to 338 (GMN).

The protein belongs to the CorA metal ion transporter (MIT) (TC 1.A.35.5) family.

It localises to the membrane. Functionally, magnesium transporter that may mediate the influx of magnesium. This Oryza sativa subsp. indica (Rice) protein is Magnesium transporter MRS2-I (MRS2-I).